A 215-amino-acid chain; its full sequence is Adenylate kinase (215 aa).

An ATP-binding site is contributed by glycine 10 to threonine 15. An NMP region spans residues serine 30–valine 59. Residues threonine 31, arginine 36, glutamine 57–valine 59, glycine 85–arginine 88, and glutamine 92 each bind AMP. The segment at glycine 121–aspartate 158 is LID. Arginine 122 contributes to the ATP binding site. Positions 125 and 128 each coordinate Zn(2+). Isoleucine 131–phenylalanine 132 contributes to the ATP binding site. Residues cysteine 145 and cysteine 148 each coordinate Zn(2+). Positions 155 and 166 each coordinate AMP. Lysine 194 lines the ATP pocket.

It belongs to the adenylate kinase family. As to quaternary structure, monomer.

It is found in the cytoplasm. The enzyme catalyses AMP + ATP = 2 ADP. It participates in purine metabolism; AMP biosynthesis via salvage pathway; AMP from ADP: step 1/1. Catalyzes the reversible transfer of the terminal phosphate group between ATP and AMP. Plays an important role in cellular energy homeostasis and in adenine nucleotide metabolism. The protein is Adenylate kinase of Borrelia recurrentis (strain A1).